A 339-amino-acid chain; its full sequence is UDP-N-acetylglucosamine--N-acetylmuramyl-(pentapeptide) pyrophosphoryl-undecaprenol N-acetylglucosamine transferase (339 aa).

UDP-N-acetyl-alpha-D-glucosamine is bound by residues 10-12 (TGG), Asn124, Arg168, Ser188, Ile235, and Gln280.

This sequence belongs to the glycosyltransferase 28 family. MurG subfamily.

It localises to the cell inner membrane. The catalysed reaction is di-trans,octa-cis-undecaprenyl diphospho-N-acetyl-alpha-D-muramoyl-L-alanyl-D-glutamyl-meso-2,6-diaminopimeloyl-D-alanyl-D-alanine + UDP-N-acetyl-alpha-D-glucosamine = di-trans,octa-cis-undecaprenyl diphospho-[N-acetyl-alpha-D-glucosaminyl-(1-&gt;4)]-N-acetyl-alpha-D-muramoyl-L-alanyl-D-glutamyl-meso-2,6-diaminopimeloyl-D-alanyl-D-alanine + UDP + H(+). It functions in the pathway cell wall biogenesis; peptidoglycan biosynthesis. Functionally, cell wall formation. Catalyzes the transfer of a GlcNAc subunit on undecaprenyl-pyrophosphoryl-MurNAc-pentapeptide (lipid intermediate I) to form undecaprenyl-pyrophosphoryl-MurNAc-(pentapeptide)GlcNAc (lipid intermediate II). This chain is UDP-N-acetylglucosamine--N-acetylmuramyl-(pentapeptide) pyrophosphoryl-undecaprenol N-acetylglucosamine transferase, found in Pseudothermotoga lettingae (strain ATCC BAA-301 / DSM 14385 / NBRC 107922 / TMO) (Thermotoga lettingae).